The sequence spans 294 residues: ATP synthase gamma chain (294 aa).

Belongs to the ATPase gamma chain family. F-type ATPases have 2 components, CF(1) - the catalytic core - and CF(0) - the membrane proton channel. CF(1) has five subunits: alpha(3), beta(3), gamma(1), delta(1), epsilon(1). CF(0) has three main subunits: a, b and c.

The protein resides in the cell inner membrane. Functionally, produces ATP from ADP in the presence of a proton gradient across the membrane. The gamma chain is believed to be important in regulating ATPase activity and the flow of protons through the CF(0) complex. In Rhizobium johnstonii (strain DSM 114642 / LMG 32736 / 3841) (Rhizobium leguminosarum bv. viciae), this protein is ATP synthase gamma chain.